Reading from the N-terminus, the 188-residue chain is Photosystem I assembly protein Ycf4 (188 aa).

A run of 2 helical transmembrane segments spans residues 26–48 and 63–85; these read FFWAGISTIGGVGFLLAGLSSYF and FIPQGVALLFYGVAGSTVAGYLW.

It belongs to the Ycf4 family.

It is found in the cellular thylakoid membrane. Seems to be required for the assembly of the photosystem I complex. The polypeptide is Photosystem I assembly protein Ycf4 (Synechocystis sp. (strain ATCC 27184 / PCC 6803 / Kazusa)).